A 429-amino-acid chain; its full sequence is Serine hydroxymethyltransferase (429 aa).

(6S)-5,6,7,8-tetrahydrofolate contacts are provided by residues Leu-126 and 130–132; that span reads GHL. Lys-235 bears the N6-(pyridoxal phosphate)lysine mark. A (6S)-5,6,7,8-tetrahydrofolate-binding site is contributed by 359-361; the sequence is SPF.

Belongs to the SHMT family. As to quaternary structure, homodimer. Requires pyridoxal 5'-phosphate as cofactor.

The protein resides in the cytoplasm. The enzyme catalyses (6R)-5,10-methylene-5,6,7,8-tetrahydrofolate + glycine + H2O = (6S)-5,6,7,8-tetrahydrofolate + L-serine. It functions in the pathway one-carbon metabolism; tetrahydrofolate interconversion. It participates in amino-acid biosynthesis; glycine biosynthesis; glycine from L-serine: step 1/1. In terms of biological role, catalyzes the reversible interconversion of serine and glycine with tetrahydrofolate (THF) serving as the one-carbon carrier. This reaction serves as the major source of one-carbon groups required for the biosynthesis of purines, thymidylate, methionine, and other important biomolecules. Also exhibits THF-independent aldolase activity toward beta-hydroxyamino acids, producing glycine and aldehydes, via a retro-aldol mechanism. This Prochlorococcus marinus (strain MIT 9313) protein is Serine hydroxymethyltransferase.